Consider the following 458-residue polypeptide: Protein amnionless (458 aa).

A signal peptide spans Met-1–Ala-19. The Extracellular segment spans residues Ala-20–Gly-362. An N-linked (GlcNAc...) asparagine glycan is attached at Asn-27. 6 cysteine pairs are disulfide-bonded: Cys-43/Cys-96, Cys-137/Cys-213, Cys-205/Cys-211, Cys-223/Cys-249, Cys-234/Cys-250, and Cys-239/Cys-253. Residues Ser-67 to Ala-87 are interaction with CUBN. Residues Gln-203–Gly-254 form the VWFC domain. N-linked (GlcNAc...) asparagine glycosylation is present at Asn-355. The chain crosses the membrane as a helical span at residues Leu-363–Leu-383. The Cytoplasmic segment spans residues His-384–Ala-458.

Interacts (via extracellular region) with CUBN/cubilin. This gives rise to a huge complex containing one AMN chain and three CUBN chains. N-glycosylated. In terms of processing, a soluble form arises by proteolytic removal of the membrane anchor. Expressed in polarized epithelial cells which are specialized in resorption or transport, specifically kidney proximal tubules and intestinal epithelium.

It localises to the apical cell membrane. The protein localises to the cell membrane. The protein resides in the endosome membrane. Its subcellular location is the membrane. It is found in the coated pit. In terms of biological role, membrane-bound component of the endocytic receptor formed by AMN and CUBN. Required for normal CUBN glycosylation and trafficking to the cell surface. The complex formed by AMN and CUBN is required for efficient absorption of vitamin B12. Required for normal CUBN-mediated protein transport in the kidney. The chain is Protein amnionless (Amn) from Mus musculus (Mouse).